The following is a 136-amino-acid chain: Large ribosomal subunit protein uL16 (136 aa).

This sequence belongs to the universal ribosomal protein uL16 family. As to quaternary structure, part of the 50S ribosomal subunit.

Binds 23S rRNA and is also seen to make contacts with the A and possibly P site tRNAs. This chain is Large ribosomal subunit protein uL16, found in Rickettsia peacockii (strain Rustic).